Consider the following 327-residue polypeptide: Taste receptor type 2 member 102 (327 aa).

Residues 1 to 7 (MEPVIYS) are Extracellular-facing. A helical transmembrane segment spans residues 8–28 (FATLLIHVEFIFGNLSNGFIV). At 29 to 46 (LSNFWDWVIKRKLSTIDK) the chain is on the cytoplasmic side. Residues 47–67 (ILLTLAISRITLIWEIYTWFT) form a helical membrane-spanning segment. Over 68 to 87 (SVYGPSSFAIGMKLQILYFT) the chain is Extracellular. Residues 88-108 (WILSSHFSLWFATALSIFYLL) form a helical membrane-spanning segment. Over 109 to 124 (RIANCSWKIFLYLKWR) the chain is Cytoplasmic. The chain crosses the membrane as a helical span at residues 125-145 (LKQVIVGMLLASLVFLPGILT). Topologically, residues 146–179 (QRTLEERPYRYGGNTSEDSMETDFARFTELILFN) are extracellular. N-linked (GlcNAc...) asparagine glycans are attached at residues asparagine 159 and asparagine 179. Residues 180–200 (LTIFSVIPFSLASISFLLLIF) traverse the membrane as a helical segment. Residues 201–229 (SLWKHLRKMQLSSRGHGDPSTKAHTNALR) lie on the Cytoplasmic side of the membrane. Residues 230–250 (IMVSFLLLYSIYFLSLLLSWI) traverse the membrane as a helical segment. Over 251–260 (AQKHHSKLVD) the chain is Extracellular. A helical transmembrane segment spans residues 261–281 (IIGIITGLMYPSAHSFILILG). The Cytoplasmic portion of the chain corresponds to 282-327 (NSKLMQTSLWILSHLRCRLKGENILNPSGNQVTSCYIFCIANKSVS).

This sequence belongs to the G-protein coupled receptor T2R family.

The protein resides in the membrane. Functionally, putative taste receptor which may play a role in the perception of bitterness. In Rattus norvegicus (Rat), this protein is Taste receptor type 2 member 102.